A 1586-amino-acid polypeptide reads, in one-letter code: Pentafunctional AROM polypeptide (1586 aa).

A 3-dehydroquinate synthase region spans residues 1-384 (MSEPTKISIL…HEPKASVVSN (384 aa)). NAD(+) is bound by residues 44–46 (DTN), 81–84 (ESSK), 114–116 (GGV), and Asp-119. Arg-130 contributes to the 7-phospho-2-dehydro-3-deoxy-D-arabino-heptonate binding site. 139–140 (TT) provides a ligand contact to NAD(+). Positions 146 and 152 each coordinate 7-phospho-2-dehydro-3-deoxy-D-arabino-heptonate. Lys-161 contacts NAD(+). Asn-162 serves as a coordination point for 7-phospho-2-dehydro-3-deoxy-D-arabino-heptonate. NAD(+) contacts are provided by residues 179-182 (FLET) and Asn-190. Glu-194 contributes to the Zn(2+) binding site. 7-phospho-2-dehydro-3-deoxy-D-arabino-heptonate contacts are provided by residues 194–197 (EVIK) and Lys-250. The active-site Proton acceptor; for 3-dehydroquinate synthase activity is Glu-260. 7-phospho-2-dehydro-3-deoxy-D-arabino-heptonate contacts are provided by residues 264-268 (RNLLN) and His-271. His-271 is a binding site for Zn(2+). Catalysis depends on His-275, which acts as the Proton acceptor; for 3-dehydroquinate synthase activity. 2 residues coordinate 7-phospho-2-dehydro-3-deoxy-D-arabino-heptonate: His-287 and Lys-356. His-287 is a binding site for Zn(2+). Residues 397-842 (VHPGVPKSLN…WDALKQMFSV (446 aa)) form an EPSP synthase region. Cys-824 acts as the For EPSP synthase activity in catalysis. The segment at 864 to 1056 (SASVFIIGMR…KKKKHSFFVS (193 aa)) is shikimate kinase. Residue 871-878 (GMRGAGKT) coordinates ATP. The interval 1057-1277 (LTLPDVEPSG…AAPGQLSAAE (221 aa)) is 3-dehydroquinase. The active-site Proton acceptor; for 3-dehydroquinate dehydratase activity is the His-1180. The active-site Schiff-base intermediate with substrate; for 3-dehydroquinate dehydratase activity is Lys-1208. A shikimate dehydrogenase region spans residues 1290-1586 (AQKFAIFGSP…SKHLDYFLSF (297 aa)).

The protein in the N-terminal section; belongs to the sugar phosphate cyclases superfamily. Dehydroquinate synthase family. It in the 2nd section; belongs to the EPSP synthase family. In the 3rd section; belongs to the shikimate kinase family. This sequence in the 4th section; belongs to the type-I 3-dehydroquinase family. The protein in the C-terminal section; belongs to the shikimate dehydrogenase family. In terms of assembly, homodimer. It depends on Zn(2+) as a cofactor.

The protein localises to the cytoplasm. The enzyme catalyses 7-phospho-2-dehydro-3-deoxy-D-arabino-heptonate = 3-dehydroquinate + phosphate. The catalysed reaction is 3-dehydroquinate = 3-dehydroshikimate + H2O. It carries out the reaction shikimate + NADP(+) = 3-dehydroshikimate + NADPH + H(+). It catalyses the reaction shikimate + ATP = 3-phosphoshikimate + ADP + H(+). The enzyme catalyses 3-phosphoshikimate + phosphoenolpyruvate = 5-O-(1-carboxyvinyl)-3-phosphoshikimate + phosphate. Its pathway is metabolic intermediate biosynthesis; chorismate biosynthesis; chorismate from D-erythrose 4-phosphate and phosphoenolpyruvate: step 2/7. It participates in metabolic intermediate biosynthesis; chorismate biosynthesis; chorismate from D-erythrose 4-phosphate and phosphoenolpyruvate: step 3/7. The protein operates within metabolic intermediate biosynthesis; chorismate biosynthesis; chorismate from D-erythrose 4-phosphate and phosphoenolpyruvate: step 4/7. It functions in the pathway metabolic intermediate biosynthesis; chorismate biosynthesis; chorismate from D-erythrose 4-phosphate and phosphoenolpyruvate: step 5/7. Its pathway is metabolic intermediate biosynthesis; chorismate biosynthesis; chorismate from D-erythrose 4-phosphate and phosphoenolpyruvate: step 6/7. Its function is as follows. The AROM polypeptide catalyzes 5 consecutive enzymatic reactions in prechorismate polyaromatic amino acid biosynthesis. This chain is Pentafunctional AROM polypeptide, found in Penicillium rubens (strain ATCC 28089 / DSM 1075 / NRRL 1951 / Wisconsin 54-1255) (Penicillium chrysogenum).